A 237-amino-acid polypeptide reads, in one-letter code: Chaplin-B (237 aa).

The N-terminal stretch at 1–26 (MRRVTRNGVLAVAASGALAVTMPAYA) is a signal peptide. A Chaplin 1 domain is found at 42–82 (SPGLISGNTVQLPVDVPVDVCGNTVNVVGLLNPAAGNGCAD). Disordered regions lie at residues 81–127 (ADSG…LSGN) and 148–216 (GIGN…TLAG). Positions 101 to 115 (GSATEATSGGAAAEG) are enriched in low complexity. Positions 120 to 160 (SPGVLSGNGVQLPVHLPVNVSGNSVNVVGIGNPAVGNESTN) constitute a Chaplin 2 domain. The span at 169–178 (VRPPAEPEPS) shows a compositional bias: pro residues. An LPXTG sorting signal motif is present at residues 202-206 (LAHTG). Thr205 is modified (pentaglycyl murein peptidoglycan amidated threonine). A propeptide spans 206 to 237 (GTDRTLPTLAGGAALVLGGTVLYRRFRPGSGD) (removed by sortase).

Belongs to the chaplin family. Long chaplin subfamily.

The protein resides in the secreted. Its subcellular location is the cell wall. In terms of biological role, one of 8 partially redundant surface-active proteins required for efficient formation of aerial mycelium; the short chaplins assemble into a hydrophobic, amyloidal fibrillar surface layer that envelopes and protects aerial hyphae and spores, presumably anchored to the long chaplins. Chaplins have an overlapping function with the surface-active SapB peptide; chaplins are essential on minimal medium while on rich medium both chaplins and SapB are required for efficient aerial hyphae formation. The long chaplins (ChpA, ChpB, ChpC) are not absolutely necessary for short chaplin localization or rodlet formation, but probably play a role in initiating aerial hyphae development. Chaplins are also involved in cell attachment to a hydrophobic surface. This Streptomyces coelicolor (strain ATCC BAA-471 / A3(2) / M145) protein is Chaplin-B.